Here is an 804-residue protein sequence, read N- to C-terminus: Leucine--tRNA ligase (804 aa).

Residues 40-51 (PYPSGAGLHVGH) carry the 'HIGH' region motif. Residues 576–580 (KMSKS) carry the 'KMSKS' region motif. Lys579 serves as a coordination point for ATP.

It belongs to the class-I aminoacyl-tRNA synthetase family.

The protein resides in the cytoplasm. It carries out the reaction tRNA(Leu) + L-leucine + ATP = L-leucyl-tRNA(Leu) + AMP + diphosphate. The sequence is that of Leucine--tRNA ligase from Staphylococcus aureus (strain bovine RF122 / ET3-1).